Reading from the N-terminus, the 130-residue chain is Small ribosomal subunit protein uS11 (130 aa).

Belongs to the universal ribosomal protein uS11 family. As to quaternary structure, part of the 30S ribosomal subunit. Interacts with proteins S7 and S18. Binds to IF-3.

Functionally, located on the platform of the 30S subunit, it bridges several disparate RNA helices of the 16S rRNA. Forms part of the Shine-Dalgarno cleft in the 70S ribosome. The sequence is that of Small ribosomal subunit protein uS11 from Parasynechococcus marenigrum (strain WH8102).